Here is a 367-residue protein sequence, read N- to C-terminus: Glutamate 5-kinase (367 aa).

An ATP-binding site is contributed by Lys-10. Ser-50, Asp-137, and Asn-149 together coordinate substrate. 169-170 (TD) contributes to the ATP binding site. In terms of domain architecture, PUA spans 275-353 (AGEITVDEGA…QQIDAILGYE (79 aa)).

It belongs to the glutamate 5-kinase family.

The protein localises to the cytoplasm. It carries out the reaction L-glutamate + ATP = L-glutamyl 5-phosphate + ADP. It functions in the pathway amino-acid biosynthesis; L-proline biosynthesis; L-glutamate 5-semialdehyde from L-glutamate: step 1/2. In terms of biological role, catalyzes the transfer of a phosphate group to glutamate to form L-glutamate 5-phosphate. This is Glutamate 5-kinase from Salmonella paratyphi B (strain ATCC BAA-1250 / SPB7).